Consider the following 233-residue polypeptide: MNAQELKKVAAAKALEFVQDGMRLGIGSGSTANEFIRLLGERVANGLHVIGVATSHYSEQLCRQVGVPVTTLEQIPELDLDIDGADEIGPNMTLIKGGGGALLREKIVAAASHEMLIIADETKVVKTLGAFALPIAVNQFGLSVTRSAIEKMAKGLGLSGKVTLRMNGDNPFKTDDGHFIFDASWGHIVQPKLLSNALFEIPGVIEHGLFVGLASRSIIAMADGQIKILEKKC.

Residues Ser-28–Thr-31, Asp-83–Asp-86, and Lys-96–Gly-99 each bind substrate. The Proton acceptor role is filled by Glu-105. Lys-123 lines the substrate pocket.

The protein belongs to the ribose 5-phosphate isomerase family. As to quaternary structure, homodimer.

It catalyses the reaction aldehydo-D-ribose 5-phosphate = D-ribulose 5-phosphate. Its pathway is carbohydrate degradation; pentose phosphate pathway; D-ribose 5-phosphate from D-ribulose 5-phosphate (non-oxidative stage): step 1/1. Its function is as follows. Catalyzes the reversible conversion of ribose-5-phosphate to ribulose 5-phosphate. This chain is Ribose-5-phosphate isomerase A, found in Bartonella bacilliformis (strain ATCC 35685 / KC583 / Herrer 020/F12,63).